Here is a 476-residue protein sequence, read N- to C-terminus: Zinc transporter SLC39A7 (476 aa).

A helical membrane pass occupies residues 7–27 (APHWVAVGLLTWAALGLLVAG). Residues 35 to 109 (HKDVEEDFHG…SHGHSHDSLH (75 aa)) show a composition bias toward basic and acidic residues. Residues 35 to 131 (HKDVEEDFHG…HGTSREAGAP (97 aa)) are disordered. Residue His73 is modified to Pros-methylhistidine. Over residues 110 to 120 (HGGHGHAHREH) the composition is skewed to basic residues. A run of 3 helical transmembrane segments spans residues 146-166 (ALGA…LIPV), 177-197 (LQIL…LHLI), and 222-242 (GPIL…LVVE). The interval 249-320 (KGGHGHSHGH…QSPEEEKAGS (72 aa)) is disordered. A compositionally biased stretch (basic and acidic residues) spans 257–292 (GHGDRHAHGDSHTHGDRHECSSKEKPSTEEEKEVGG). Phosphoserine is present on Ser283. A run of 2 helical transmembrane segments spans residues 393–413 (VTAI…GGAV) and 417–437 (VAGG…FIYV).

The protein belongs to the ZIP transporter (TC 2.A.5) family. KE4/Catsup subfamily. Homodimer. In terms of processing, methylation at some His residue by METTL9 leads to reduced zinc-binding. Post-translationally, rapidly phosphorylated by CK2 following Zn(2+) treatment. This phosphorylation is required for efficient cytosolic Zn(2+) release. As to expression, widely expressed. Highly expressed in the intestinal crypts.

Its subcellular location is the endoplasmic reticulum membrane. It is found in the golgi apparatus. The protein resides in the cis-Golgi network membrane. It carries out the reaction Zn(2+)(in) = Zn(2+)(out). Functionally, transports Zn(2+) from the endoplasmic reticulum (ER)/Golgi apparatus to the cytosol, playing an essential role in the regulation of cytosolic zinc levels. Acts as a gatekeeper of zinc release from intracellular stores, requiring post-translational activation by phosphorylation, resulting in activation of multiple downstream pathways leading to cell growth and proliferation. Has an essential role in B cell development and is required for proper B cell receptor signaling. Plays an important role in maintaining intestinal epithelial homeostasis and skin dermis development by regulating ER function. Controls cell signaling pathways involved in glucose metabolism in skeletal muscle. Has a protective role against ER stress in different biological contexts. Mediates Zn(2+)-induced ferroptosis. This is Zinc transporter SLC39A7 (Slc39a7) from Mus musculus (Mouse).